The primary structure comprises 270 residues: MAAPGEALTQSGYIEHHLSNLSLAKLGMVADETSFWNVHIDSLFFSVLTGMLFLWVFRSVAKKATTGVPGKLQCFVEMVVEFVADNVKETFHGRNPLVAPLALTIFCWVILMNLMDLIPIDFLPYSAAHWLGIPYLKVVPSADVNITMAMALGVFALMIYYSIKVKGLGGFAKELALHPFNHPIMIPFNLLLEVISLLAKPLSLGMRLFGNMFAGEVVFILIAAMLPWYLQWVGALPWAIFHILVILIQAFVFMMLTIVYLSMAHEDPDH.

A run of 5 helical transmembrane segments spans residues 37–57 (NVHIDSLFFSVLTGMLFLWVF), 98–118 (VAPLALTIFCWVILMNLMDLI), 143–163 (DVNITMAMALGVFALMIYYSI), 217–237 (VVFILIAAMLPWYLQWVGALP), and 239–259 (AIFHILVILIQAFVFMMLTIV).

It belongs to the ATPase A chain family. F-type ATPases have 2 components, CF(1) - the catalytic core - and CF(0) - the membrane proton channel. CF(1) has five subunits: alpha(3), beta(3), gamma(1), delta(1), epsilon(1). CF(0) has three main subunits: a(1), b(2) and c(9-12). The alpha and beta chains form an alternating ring which encloses part of the gamma chain. CF(1) is attached to CF(0) by a central stalk formed by the gamma and epsilon chains, while a peripheral stalk is formed by the delta and b chains.

It localises to the cell inner membrane. In terms of biological role, key component of the proton channel; it plays a direct role in the translocation of protons across the membrane. This is ATP synthase subunit a from Aliivibrio salmonicida (strain LFI1238) (Vibrio salmonicida (strain LFI1238)).